A 368-amino-acid chain; its full sequence is uncharacterized protein (368 aa).

The tract at residues 237–287 (ESLSIPSRRRPSSIAPIGTRPSRKEIAFSNSSTPTDQTLRPPNPPAANGNA) is disordered. The span at 238–253 (SLSIPSRRRPSSIAPI) shows a compositional bias: low complexity. Residues 264 to 276 (FSNSSTPTDQTLR) show a composition bias toward polar residues.

This is an uncharacterized protein from Schizosaccharomyces pombe (strain 972 / ATCC 24843) (Fission yeast).